The following is a 401-amino-acid chain: Divinyl chlorophyllide a 8-vinyl-reductase, chloroplastic (401 aa).

Over residues 1–10 the composition is skewed to polar residues; that stretch reads MATILLSSRL. A disordered region spans residues 1–26; sequence MATILLSSRLPTTGTATPSPTRPAPR. Residues 1-54 constitute a chloroplast transit peptide; it reads MATILLSSRLPTTGTATPSPTRPAPRFLSFPGTAIRRRGRGPLLASSAVSPPAP.

It is found in the plastid. The protein localises to the chloroplast. It carries out the reaction protochlorophyllide a + NADP(+) = 3,8-divinyl protochlorophyllide a + NADPH + H(+). It functions in the pathway porphyrin-containing compound metabolism; chlorophyll biosynthesis. In terms of biological role, catalyzes the conversion of divinyl chlorophyllide to monovinyl chlorophyllide. Reduces the 8-vinyl group of the tetrapyrrole to an ethyl group using NADPH as the reductant. Can use (3,8-divinyl)-chlorophyllide a (DV-Chlidea) &gt; (3,8-divinyl)-chlorophyll a (DV-Chla) &gt; (3,8-divinyl)-protochlorophyllide a (DV-Pchlidea) &gt; (3,8-divinyl)-magnesium-protoporphyrin IX monomethyl ester (DV-MPE) &gt; (3,8-divinyl)-magnesium-protoporphyrin IX (DV-Mg-Proto) as substrates. The protein is Divinyl chlorophyllide a 8-vinyl-reductase, chloroplastic (DVR) of Zea mays (Maize).